Reading from the N-terminus, the 172-residue chain is Cytochrome c oxidase subunit 4 isoform 2, mitochondrial (172 aa).

Residues 1–34 constitute a mitochondrion transit peptide; it reads MFSRAARSLVMRTGLRTRGTGTHSPGDAAGSQRR. A compositionally biased stretch (low complexity) spans 13–22; that stretch reads TGLRTRGTGT. The tract at residues 13–32 is disordered; the sequence is TGLRTRGTGTHSPGDAAGSQ. The Mitochondrial matrix segment spans residues 35–101; it reads MTPYVDCYAQ…TFAEMNHRSN (67 aa). A helical transmembrane segment spans residues 102-127; it reads EWKTVMGCVFFFIGFTALVIWWQRVY. Over 128-172 the chain is Mitochondrial intermembrane; it reads VFPKKVVTLTEERKAQQLQRLLDMKSNPIQGLAAHWDYEKKEWKK.

The protein belongs to the cytochrome c oxidase IV family. In terms of assembly, component of the cytochrome c oxidase (complex IV, CIV), a multisubunit enzyme composed of 14 subunits. The complex is composed of a catalytic core of 3 subunits MT-CO1, MT-CO2 and MT-CO3, encoded in the mitochondrial DNA, and 11 supernumerary subunits COX4I, COX5A, COX5B, COX6A, COX6B, COX6C, COX7A, COX7B, COX7C, COX8 and NDUFA4, which are encoded in the nuclear genome. The complex exists as a monomer or a dimer and forms supercomplexes (SCs) in the inner mitochondrial membrane with NADH-ubiquinone oxidoreductase (complex I, CI) and ubiquinol-cytochrome c oxidoreductase (cytochrome b-c1 complex, complex III, CIII), resulting in different assemblies (supercomplex SCI(1)III(2)IV(1) and megacomplex MCI(2)III(2)IV(2)).

Its subcellular location is the mitochondrion inner membrane. Its pathway is energy metabolism; oxidative phosphorylation. Component of the cytochrome c oxidase, the last enzyme in the mitochondrial electron transport chain which drives oxidative phosphorylation. The respiratory chain contains 3 multisubunit complexes succinate dehydrogenase (complex II, CII), ubiquinol-cytochrome c oxidoreductase (cytochrome b-c1 complex, complex III, CIII) and cytochrome c oxidase (complex IV, CIV), that cooperate to transfer electrons derived from NADH and succinate to molecular oxygen, creating an electrochemical gradient over the inner membrane that drives transmembrane transport and the ATP synthase. Cytochrome c oxidase is the component of the respiratory chain that catalyzes the reduction of oxygen to water. Electrons originating from reduced cytochrome c in the intermembrane space (IMS) are transferred via the dinuclear copper A center (CU(A)) of subunit 2 and heme A of subunit 1 to the active site in subunit 1, a binuclear center (BNC) formed by heme A3 and copper B (CU(B)). The BNC reduces molecular oxygen to 2 water molecules using 4 electrons from cytochrome c in the IMS and 4 protons from the mitochondrial matrix. The polypeptide is Cytochrome c oxidase subunit 4 isoform 2, mitochondrial (Cox4i2) (Mus musculus (Mouse)).